We begin with the raw amino-acid sequence, 307 residues long: UDP-N-acetylenolpyruvoylglucosamine reductase (307 aa).

The FAD-binding PCMH-type domain occupies 34-198; it reads TGGNADFYLS…LEAAFTLEPG (165 aa). Residue arginine 177 is part of the active site. Serine 227 (proton donor) is an active-site residue. Glutamate 297 is a catalytic residue.

It belongs to the MurB family. FAD is required as a cofactor.

It localises to the cytoplasm. The catalysed reaction is UDP-N-acetyl-alpha-D-muramate + NADP(+) = UDP-N-acetyl-3-O-(1-carboxyvinyl)-alpha-D-glucosamine + NADPH + H(+). It functions in the pathway cell wall biogenesis; peptidoglycan biosynthesis. In terms of biological role, cell wall formation. The protein is UDP-N-acetylenolpyruvoylglucosamine reductase of Staphylococcus haemolyticus (strain JCSC1435).